The primary structure comprises 102 residues: Small ribosomal subunit protein uS10 (102 aa).

The protein belongs to the universal ribosomal protein uS10 family. In terms of assembly, part of the 30S ribosomal subunit.

Its function is as follows. Involved in the binding of tRNA to the ribosomes. This Thermococcus gammatolerans (strain DSM 15229 / JCM 11827 / EJ3) protein is Small ribosomal subunit protein uS10.